The sequence spans 172 residues: 3-hydroxydecanoyl-[acyl-carrier-protein] dehydratase (172 aa).

His-71 is a catalytic residue.

It belongs to the thioester dehydratase family. FabA subfamily. In terms of assembly, homodimer.

Its subcellular location is the cytoplasm. The catalysed reaction is a (3R)-hydroxyacyl-[ACP] = a (2E)-enoyl-[ACP] + H2O. It catalyses the reaction (3R)-hydroxydecanoyl-[ACP] = (2E)-decenoyl-[ACP] + H2O. The enzyme catalyses (2E)-decenoyl-[ACP] = (3Z)-decenoyl-[ACP]. The protein operates within lipid metabolism; fatty acid biosynthesis. Necessary for the introduction of cis unsaturation into fatty acids. Catalyzes the dehydration of (3R)-3-hydroxydecanoyl-ACP to E-(2)-decenoyl-ACP and then its isomerization to Z-(3)-decenoyl-ACP. Can catalyze the dehydratase reaction for beta-hydroxyacyl-ACPs with saturated chain lengths up to 16:0, being most active on intermediate chain length. This chain is 3-hydroxydecanoyl-[acyl-carrier-protein] dehydratase, found in Cronobacter sakazakii (strain ATCC BAA-894) (Enterobacter sakazakii).